Consider the following 161-residue polypeptide: Cyclic pyranopterin monophosphate synthase (161 aa).

Residues 78–80 (MCH) and 116–117 (ME) each bind substrate. The active site involves Asp131.

Belongs to the MoaC family. In terms of assembly, homohexamer; trimer of dimers.

The enzyme catalyses (8S)-3',8-cyclo-7,8-dihydroguanosine 5'-triphosphate = cyclic pyranopterin phosphate + diphosphate. The protein operates within cofactor biosynthesis; molybdopterin biosynthesis. Catalyzes the conversion of (8S)-3',8-cyclo-7,8-dihydroguanosine 5'-triphosphate to cyclic pyranopterin monophosphate (cPMP). The sequence is that of Cyclic pyranopterin monophosphate synthase from Nitratidesulfovibrio vulgaris (strain ATCC 29579 / DSM 644 / CCUG 34227 / NCIMB 8303 / VKM B-1760 / Hildenborough) (Desulfovibrio vulgaris).